Here is a 34-residue protein sequence, read N- to C-terminus: DDIT3 upstream open reading frame protein (34 aa).

As to quaternary structure, interacts with DDIT3 (isoform 1).

It is found in the nucleus. The protein localises to the cytoplasm. Product of the upstream open reading frame (uORF) of DDIT3/CHOP that is specifically produced in absence of stress, thereby preventing translation of downstream stress effector DDIT3/CHOP. This Mus musculus (Mouse) protein is DDIT3 upstream open reading frame protein.